The sequence spans 427 residues: UDP-N-acetyl-D-mannosamine dehydrogenase (427 aa).

NAD(+) contacts are provided by tyrosine 20, isoleucine 21, aspartate 40, arginine 45, threonine 92, and threonine 130. UDP-N-acetyl-alpha-D-mannosaminouronate-binding residues include arginine 157, valine 158, lysine 209, asparagine 213, arginine 216, histidine 247, arginine 249, and glycine 260. The active-site Proton donor/acceptor is lysine 209. Cysteine 263 (nucleophile) is an active-site residue. Residues tyrosine 317 and lysine 318 each contribute to the UDP-N-acetyl-alpha-D-mannosaminouronate site. Arginine 325 contributes to the NAD(+) binding site. Lysine 403 lines the UDP-N-acetyl-alpha-D-mannosaminouronate pocket.

This sequence belongs to the UDP-glucose/GDP-mannose dehydrogenase family. Homotetramer; probably dimer of dimers.

The catalysed reaction is UDP-N-acetyl-alpha-D-mannosamine + 2 NAD(+) + H2O = UDP-N-acetyl-alpha-D-mannosaminouronate + 2 NADH + 3 H(+). Functionally, catalyzes the four-electron oxidation of UDP-N-acetyl-D-mannosamine (UDP-ManNAc), reducing NAD(+) and releasing UDP-N-acetylmannosaminuronic acid (UDP-ManNAcA). The chain is UDP-N-acetyl-D-mannosamine dehydrogenase (wecC) from Methanocaldococcus jannaschii (strain ATCC 43067 / DSM 2661 / JAL-1 / JCM 10045 / NBRC 100440) (Methanococcus jannaschii).